Reading from the N-terminus, the 351-residue chain is Autoinducer 2 import system permease protein LsrC (351 aa).

9 helical membrane passes run 14 to 34 (LLAI…YFSL), 39 to 59 (MIFS…LVML), 70 to 90 (ITGL…GLAA), 93 to 113 (LFAL…VTWL), 115 to 135 (IPAI…MLLL), 155 to 175 (ILFS…AMAW), 213 to 233 (MNGV…GFIP), 252 to 272 (GISL…AFLL), and 284 to 304 (LPAW…LVFD).

Belongs to the binding-protein-dependent transport system permease family. AraH/RbsC subfamily. The complex is composed of two ATP-binding proteins (LsrA), two transmembrane proteins (LsrC and LsrD) and a solute-binding protein (LsrB).

It localises to the cell inner membrane. Its function is as follows. Part of the ABC transporter complex LsrABCD involved in autoinducer 2 (AI-2) import. Probably responsible for the translocation of the substrate across the membrane. The protein is Autoinducer 2 import system permease protein LsrC (lsrC) of Yersinia pestis bv. Antiqua (strain Antiqua).